The chain runs to 274 residues: Elongation factor Ts (274 aa).

An involved in Mg(2+) ion dislocation from EF-Tu region spans residues 82-85; sequence TDFV.

It belongs to the EF-Ts family.

It is found in the cytoplasm. Functionally, associates with the EF-Tu.GDP complex and induces the exchange of GDP to GTP. It remains bound to the aminoacyl-tRNA.EF-Tu.GTP complex up to the GTP hydrolysis stage on the ribosome. This chain is Elongation factor Ts, found in Flavobacterium psychrophilum (strain ATCC 49511 / DSM 21280 / CIP 103535 / JIP02/86).